The sequence spans 889 residues: Inter-alpha-trypsin inhibitor heavy chain H3 (889 aa).

The first 21 residues, 1-21 (MRTMWWPCLVLALLSGLETSG), serve as a signal peptide directing secretion. The propeptide occupies 22-33 (FPRSPLQLLGKR). Positions 29–158 (LLGKRSLPEG…KVTFELTYEE (130 aa)) constitute a VIT domain. N-linked (GlcNAc...) asparagine glycosylation occurs at Asn-91. The VWFA domain occupies 284 to 467 (NIVFVIDVSG…LQLQGFYEEV (184 aa)). Asn-580 is a glycosylation site (N-linked (GlcNAc...) asparagine). Asp-649 is modified (aspartate 1-(chondroitin 4-sulfate)-ester). A propeptide spanning residues 650–889 (PHFIIQIPGK…HTDYIVPSLF (240 aa)) is cleaved from the precursor.

This sequence belongs to the ITIH family. In terms of assembly, I-alpha-I plasma protease inhibitors are assembled from one or two heavy chains (HC) and one light chain, bikunin. Pre-alpha-inhibitor (P-alpha-I) is composed of ITIH3/HC3 and bikunin. Post-translationally, heavy chains are linked to bikunin via chondroitin 4-sulfate esterified to the alpha-carboxyl of the C-terminal aspartate after propeptide cleavage. In terms of tissue distribution, expressed in both liver and brain.

Its subcellular location is the secreted. Functionally, may act as a carrier of hyaluronan in serum or as a binding protein between hyaluronan and other matrix protein, including those on cell surfaces in tissues to regulate the localization, synthesis and degradation of hyaluronan which are essential to cells undergoing biological processes. This chain is Inter-alpha-trypsin inhibitor heavy chain H3 (Itih3), found in Mus musculus (Mouse).